Here is a 195-residue protein sequence, read N- to C-terminus: uncharacterized protein (195 aa).

Positions 34 to 165 (SHHAAVLIPI…WLDIHRGGVN (132 aa)) constitute a Nudix hydrolase domain. The Nudix box motif lies at 72-94 (GKADPQDSSLIETALREAEEEVA). Positions 88 and 92 each coordinate Mg(2+).

The protein belongs to the Nudix hydrolase family. PCD1 subfamily. Mn(2+) serves as cofactor. The cofactor is Mg(2+).

Functionally, probably mediates the hydrolysis of some nucleoside diphosphate derivatives. This is an uncharacterized protein from Yersinia enterocolitica serotype O:8 / biotype 1B (strain NCTC 13174 / 8081).